We begin with the raw amino-acid sequence, 199 residues long: Probable GTP-binding protein EngB (199 aa).

Residues 24 to 197 enclose the EngB-type G domain; sequence EGYEVIFAGR…GARLNTFFGY (174 aa). Residues 32–39, 59–63, 77–80, 144–147, and 176–178 contribute to the GTP site; these read GRSNAGKS, GKTQH, DLPG, TKSD, and FSS. Mg(2+) contacts are provided by S39 and T61.

This sequence belongs to the TRAFAC class TrmE-Era-EngA-EngB-Septin-like GTPase superfamily. EngB GTPase family. Requires Mg(2+) as cofactor.

Functionally, necessary for normal cell division and for the maintenance of normal septation. The polypeptide is Probable GTP-binding protein EngB (Ruthia magnifica subsp. Calyptogena magnifica).